Consider the following 462-residue polypeptide: ESX-1 secretion system protein EccE1 (462 aa).

2 consecutive transmembrane segments (helical) span residues 9 to 29 (FSTG…IAFL) and 34 to 54 (WWAG…TFYG).

Belongs to the EccE family. As to quaternary structure, part of the ESX-1 / type VII secretion system (T7SS), which is composed of cytosolic and membrane components. The ESX-1 membrane complex is composed of EccB1, EccCa1, EccCb1, EccD1 and EccE1.

It localises to the cell inner membrane. Part of the ESX-1 specialized secretion system, which delivers several virulence factors to host cells during infection, including the key virulence factors EsxA (ESAT-6) and EsxB (CFP-10). The polypeptide is ESX-1 secretion system protein EccE1 (Mycobacterium tuberculosis (strain CDC 1551 / Oshkosh)).